A 1226-amino-acid chain; its full sequence is Chromosome-associated kinesin KIF4 (1226 aa).

The 330-residue stretch at 8–337 folds into the Kinesin motor domain; sequence PVRVALRCRP…LRYADRARKI (330 aa). 87 to 94 contributes to the ATP binding site; it reads GQTGSGKT. The stretch at 351 to 1006 forms a coiled coil; sequence ELQRLKLQVQ…YKQKLALLHV (656 aa). The span at 494–505 shows a compositional bias: acidic residues; that stretch reads EAASFPVPEEDS. Disordered regions lie at residues 494-516, 722-741, and 1052-1078; these read EAAS…GFTT, QRQK…GMEG, and DLLS…KQSK. A compositionally biased stretch (basic and acidic residues) spans 722-735; that stretch reads QRQKEAMEKRKDSQ. Residues 1007 to 1226 are globular; that stretch reads ASGKKLHNIL…SGCSAITEDE (220 aa). Residues 1053–1064 show a composition bias toward acidic residues; that stretch reads LLSESESEEESD.

The protein belongs to the TRAFAC class myosin-kinesin ATPase superfamily. Kinesin family. Chromokinesin subfamily. [2Fe-2S] cluster is required as a cofactor. It depends on [4Fe-4S] cluster as a cofactor. In terms of tissue distribution, expressed in oocytes, eggs, testes and brain.

It localises to the nucleus. The protein localises to the chromosome. It is found in the cytoplasm. The protein resides in the cytoskeleton. Functionally, iron-sulfur (Fe-S) cluster binding motor protein that has a role in chromosome segregation during mitosis. Required for mitotic chromosomal positioning and bipolar spindle stabilization. The sequence is that of Chromosome-associated kinesin KIF4 (kif4) from Xenopus laevis (African clawed frog).